The chain runs to 295 residues: Phosphatidylserine decarboxylase proenzyme (295 aa).

Catalysis depends on charge relay system; for autoendoproteolytic cleavage activity residues Asp-113, His-169, and Ser-256. Ser-256 (schiff-base intermediate with substrate; via pyruvic acid; for decarboxylase activity) is an active-site residue. At Ser-256 the chain carries Pyruvic acid (Ser); by autocatalysis.

Belongs to the phosphatidylserine decarboxylase family. PSD-B subfamily. Prokaryotic type II sub-subfamily. Heterodimer of a large membrane-associated beta subunit and a small pyruvoyl-containing alpha subunit. Pyruvate is required as a cofactor. Post-translationally, is synthesized initially as an inactive proenzyme. Formation of the active enzyme involves a self-maturation process in which the active site pyruvoyl group is generated from an internal serine residue via an autocatalytic post-translational modification. Two non-identical subunits are generated from the proenzyme in this reaction, and the pyruvate is formed at the N-terminus of the alpha chain, which is derived from the carboxyl end of the proenzyme. The autoendoproteolytic cleavage occurs by a canonical serine protease mechanism, in which the side chain hydroxyl group of the serine supplies its oxygen atom to form the C-terminus of the beta chain, while the remainder of the serine residue undergoes an oxidative deamination to produce ammonia and the pyruvoyl prosthetic group on the alpha chain. During this reaction, the Ser that is part of the protease active site of the proenzyme becomes the pyruvoyl prosthetic group, which constitutes an essential element of the active site of the mature decarboxylase.

It is found in the cell membrane. The catalysed reaction is a 1,2-diacyl-sn-glycero-3-phospho-L-serine + H(+) = a 1,2-diacyl-sn-glycero-3-phosphoethanolamine + CO2. It functions in the pathway phospholipid metabolism; phosphatidylethanolamine biosynthesis; phosphatidylethanolamine from CDP-diacylglycerol: step 2/2. In terms of biological role, catalyzes the formation of phosphatidylethanolamine (PtdEtn) from phosphatidylserine (PtdSer). The chain is Phosphatidylserine decarboxylase proenzyme from Clostridium novyi (strain NT).